The primary structure comprises 182 residues: ATP-dependent protease subunit HslV (182 aa).

T9 is an active-site residue. Residues A167, C170, and T173 each coordinate Na(+).

It belongs to the peptidase T1B family. HslV subfamily. As to quaternary structure, a double ring-shaped homohexamer of HslV is capped on each side by a ring-shaped HslU homohexamer. The assembly of the HslU/HslV complex is dependent on binding of ATP.

It is found in the cytoplasm. It catalyses the reaction ATP-dependent cleavage of peptide bonds with broad specificity.. Allosterically activated by HslU binding. Its function is as follows. Protease subunit of a proteasome-like degradation complex believed to be a general protein degrading machinery. The sequence is that of ATP-dependent protease subunit HslV from Enterococcus faecalis (strain ATCC 700802 / V583).